Reading from the N-terminus, the 628-residue chain is Siderophore iron transporter 1 (628 aa).

Helical transmembrane passes span 68–88 (IYRV…GLDG), 107–127 (LLST…IFFA), 132–152 (IFGR…GTII), 164–184 (VGGC…EVIA), 194–214 (LLAL…SGNV), 225–245 (GIGM…ICML), 285–305 (IIGM…FTLA), 317–337 (IIVP…LWEI), 354–374 (GIFF…MQGD), 394–414 (ITSL…FILI), 420–440 (KPFI…LVHY), 448–468 (SGII…TYVT), 488–508 (LYLA…GAVW), and 559–579 (KILC…AFML).

The protein belongs to the major facilitator superfamily.

Its subcellular location is the endosome membrane. Functionally, involved in the transport of siderophore ferrioxamine B and so has a role in iron homeostasis. The chain is Siderophore iron transporter 1 (SIT1) from Saccharomyces cerevisiae (strain ATCC 204508 / S288c) (Baker's yeast).